A 603-amino-acid polypeptide reads, in one-letter code: Serine palmitoyltransferase 2 (603 aa).

The helical transmembrane segment at Tyr90–Gly107 threads the bilayer. Lys398 bears the N6-(pyridoxal phosphate)lysine mark.

Belongs to the class-II pyridoxal-phosphate-dependent aminotransferase family. Lcb1 and lcb2 encode essential subunits of the enzyme and form a heterodimer. Pyridoxal 5'-phosphate is required as a cofactor.

It is found in the cytoplasm. It localises to the endoplasmic reticulum. Its subcellular location is the membrane. The enzyme catalyses L-serine + hexadecanoyl-CoA + H(+) = 3-oxosphinganine + CO2 + CoA. The protein operates within lipid metabolism; sphingolipid metabolism. Its function is as follows. Catalytic subunit of serine palmitoyltransferase (SPT), which catalyzes the committed step in the synthesis of sphingolipids, the condensation of serine with palmitoyl CoA to form the long chain base 3-ketosphinganine. The sequence is that of Serine palmitoyltransferase 2 (lcb2) from Schizosaccharomyces pombe (strain 972 / ATCC 24843) (Fission yeast).